The following is a 317-amino-acid chain: uncharacterized protein (317 aa).

Belongs to the asfivirus F317L family.

The protein localises to the virion. This is an uncharacterized protein from African swine fever virus (isolate Tick/South Africa/Pretoriuskop Pr4/1996) (ASFV).